Consider the following 290-residue polypeptide: Ribosome-inactivating protein bryodin I (290 aa).

Positions M1–G23 are cleaved as a signal peptide. Catalysis depends on residues E183 and E212. Residues N214 and N250 are each glycosylated (N-linked (GlcNAc...) asparagine). A propeptide spans A271 to I290 (removed in mature form).

Belongs to the ribosome-inactivating protein family. Type 1 RIP subfamily. In terms of processing, appears to undergo proteolytic cleavage in the C-terminal to produce a shorter protein.

It carries out the reaction Endohydrolysis of the N-glycosidic bond at one specific adenosine on the 28S rRNA.. Functionally, ribosome-inactivating protein of type 1, inhibits protein synthesis in animal cells. This Bryonia dioica (Red bryony) protein is Ribosome-inactivating protein bryodin I.